The following is a 695-amino-acid chain: MAETKIIYHMDEEETPYLVKLPVAPERVTLADFKNVLSNRPVHAYKFFFKSMDQDFGVVKEEIFDDNAKLPCFNGRVVSWLVLAEGAHSDAGSQGTDSHTDLPPPLERTGGIGDSRPPSFHPNVASSRDGMDNETGTESMVSHRRERARRRNRDEAARTNGHPRGDRRRELGLPPDSASTVLSSELESSSFIDSDEEDNTSRLSSSTEQSTSSRLIRKHKCRRRKQRLRQTDRASSFSSITDSTMSLNIITVTLNMERHHFLGISIVGQSNDRGDGGIYIGSIMKGGAVAADGRIEPGDMLLQVNDVNFENMSNDDAVRVLREIVSQTGPISLTVAKCWDPTPRSYFTIPRADPVRPIDPAAWLSHTAALTGALPRYGTSPCSSAITRTSSSSLTSSVPGAPQLEEAPLTVKSDMSAIVRVMQLPDSGLEIRDRMWLKITIANAVIGADVVDWLYTHVEGFKERREARKYASSMLKHGFLRHTVNKITFSEQCYYVFGDLCSNLASLNLNSGSSGASDQDTLAPLPHPSVPWPLGQGYPYQYPGPPPCFPPAYQDPGFSYGSGSAGSQQSEGSKSSGSTRSSHRTPGREERRATGAGGSGSESDHTVPSGSGSTGWWERPVSQLSRGSSPRSQASAVAPGLPPLHPLTKAYAVVGGPPGGPPVRELAAVPPELTGSRQSFQKAMGNPCEFFVDIM.

A DIX domain is found at Met-1–Glu-85. The disordered stretch occupies residues Ser-89–Ser-236. Residues Ser-142 to Arg-151 show a composition bias toward basic residues. A compositionally biased stretch (basic and acidic residues) spans Asn-152 to Leu-171. Residues Ser-177–Ile-192 show a composition bias toward low complexity. Ser-194 is subject to Phosphoserine. Positions Ser-201–Arg-214 are enriched in low complexity. The segment covering Leu-215–Leu-228 has biased composition (basic residues). The 73-residue stretch at Thr-251–Glu-323 folds into the PDZ domain. The region spanning Pro-425–Asp-499 is the DEP domain. The segment covering Pro-551–Arg-580 has biased composition (low complexity). The disordered stretch occupies residues Pro-551–Leu-641. Residues Ser-622 to Ser-635 are compositionally biased toward polar residues.

It belongs to the DSH family. As to quaternary structure, interacts with BRD7 and INVS. Interacts (via PDZ domain) with the VANGL1 and VANGL2 (via C-terminus). Interacts (via PDZ domain) with NXN. Interacts with CXXC4. Interacts with ARRB1; the interaction is enhanced by phosphorylation of DVL1. Interacts with CYLD. Interacts (via PDZ domain) with RYK. Self-associates (via DIX domain) and forms higher homooligomers. Interacts (via PDZ domain) with DACT1 and FZD7, where DACT1 and FZD7 compete for the same binding site. Interacts (via DEP domain) with MUSK; the interaction is direct and mediates the formation a DVL1, MUSK and PAK1 ternary complex involved in AChR clustering. Interacts (via PDZ domain) with TMEM88. Interacts with DCDC2. Interacts with FOXK2. Interacts with PKD1 (via extracellular domain). Interacts (via PDZ domain) with CCDC88C/DAPLE; competes with CCDC88C for binding to frizzled receptor FZD7 and dissociates from CCDC88C following initiation of non-canonical Wnt signaling when CCDC88C displaces DVL1 from ligand-activated FZD7. In terms of processing, ubiquitinated; undergoes both 'Lys-48'-linked ubiquitination, leading to its subsequent degradation by the ubiquitin-proteasome pathway, and 'Lys-63'-linked ubiquitination. The interaction with INVS is required for ubiquitination. Deubiquitinated by CYLD, which acts on 'Lys-63'-linked ubiquitin chains.

The protein localises to the cell membrane. The protein resides in the cytoplasm. It localises to the cytosol. It is found in the cytoplasmic vesicle. Its function is as follows. Participates in Wnt signaling by binding to the cytoplasmic C-terminus of frizzled family members and transducing the Wnt signal to down-stream effectors. Plays a role both in canonical and non-canonical Wnt signaling. Plays a role in the signal transduction pathways mediated by multiple Wnt genes. Required for LEF1 activation upon WNT1 and WNT3A signaling. DVL1 and PAK1 form a ternary complex with MUSK which is important for MUSK-dependent regulation of AChR clustering during the formation of the neuromuscular junction (NMJ). The polypeptide is Segment polarity protein dishevelled homolog DVL-1 (Dvl1) (Rattus norvegicus (Rat)).